A 121-amino-acid chain; its full sequence is Small ribosomal subunit protein uS13 (121 aa).

The interval 91 to 121 is disordered; it reads HRRGLPVRGQNTKNNARTRKGKKASMAGKKK. Residues 106 to 121 show a composition bias toward basic residues; that stretch reads ARTRKGKKASMAGKKK.

It belongs to the universal ribosomal protein uS13 family. In terms of assembly, part of the 30S ribosomal subunit. Forms a loose heterodimer with protein S19. Forms two bridges to the 50S subunit in the 70S ribosome.

Functionally, located at the top of the head of the 30S subunit, it contacts several helices of the 16S rRNA. In the 70S ribosome it contacts the 23S rRNA (bridge B1a) and protein L5 of the 50S subunit (bridge B1b), connecting the 2 subunits; these bridges are implicated in subunit movement. Contacts the tRNAs in the A and P-sites. The sequence is that of Small ribosomal subunit protein uS13 from Lacticaseibacillus paracasei (strain ATCC 334 / BCRC 17002 / CCUG 31169 / CIP 107868 / KCTC 3260 / NRRL B-441) (Lactobacillus paracasei).